The primary structure comprises 237 residues: Ribosomal RNA large subunit methyltransferase E (237 aa).

S-adenosyl-L-methionine is bound by residues glycine 76, tryptophan 78, aspartate 99, aspartate 115, and aspartate 139. The active-site Proton acceptor is the lysine 179.

The protein belongs to the class I-like SAM-binding methyltransferase superfamily. RNA methyltransferase RlmE family.

The protein localises to the cytoplasm. The enzyme catalyses uridine(2552) in 23S rRNA + S-adenosyl-L-methionine = 2'-O-methyluridine(2552) in 23S rRNA + S-adenosyl-L-homocysteine + H(+). Specifically methylates the uridine in position 2552 of 23S rRNA at the 2'-O position of the ribose in the fully assembled 50S ribosomal subunit. The chain is Ribosomal RNA large subunit methyltransferase E from Rhodopseudomonas palustris (strain ATCC BAA-98 / CGA009).